Consider the following 502-residue polypeptide: MEEIQRYLQLDRSQQHDCLYPLIFQEYIYALAHDHGLNRSILLENPGYDNKSSLLIVKRLITRMYQQNHFFISVNDSNQDQFFGRNKNLYSQMISEGFAFIVEMTFSLRLISSLEGKEIFKSHNLRSIHSIFPFLEDNFSHLNCVLDILIPHPVHPEILVQTLRFWVKDASSLHLLRFFLHEYWNNLITLKKPSSSFSKRNQRLFFFLYNSHVCEYESIFVFLRNQSSHLRSTSFGALLERIYFYGKIERLVEVFAKDFQATLWLFKDPFIHYVRYQGKLILASKGTPLLMNKWKYYLVNFWQCYFYLWSRPGRIYINQLSNHSLDFMGYLSSVRLNPSMVRSQMLENAFLVNNVIKKFDTLLPIIPLIGSLAKAKFCNILGNPISKPVRADLSDSDIIDRFGRICRNLSHYHSGSSKKKSLYRIKYILRLSCAKTLARKHKSSVRAFLKRFGSGLLEEFLTSEEQVLSLTFPRASSTLWGVYRSRIWYLDIICINDLANHQ.

It belongs to the intron maturase 2 family. MatK subfamily.

It localises to the plastid. The protein resides in the chloroplast. Usually encoded in the trnK tRNA gene intron. Probably assists in splicing its own and other chloroplast group II introns. This Ehretia anacua (Sandpaper tree) protein is Maturase K.